The primary structure comprises 196 residues: Nodulation protein A (196 aa).

The protein belongs to the NodA family.

It is found in the cytoplasm. In terms of biological role, N-acyltransferase required for nodulation. Acts in the production of a small, heat-stable compound (Nod) that stimulates mitosis in various plant protoplasts. This chain is Nodulation protein A, found in Mesorhizobium plurifarium.